The primary structure comprises 329 residues: Acetyl-coenzyme A carboxylase carboxyl transferase subunit alpha (329 aa).

A CoA carboxyltransferase C-terminal domain is found at 40-294 (QLETLAARRR…KNALEKHLSE (255 aa)).

Belongs to the AccA family. Acetyl-CoA carboxylase is a heterohexamer composed of biotin carboxyl carrier protein (AccB), biotin carboxylase (AccC) and two subunits each of ACCase subunit alpha (AccA) and ACCase subunit beta (AccD).

The protein localises to the cytoplasm. The enzyme catalyses N(6)-carboxybiotinyl-L-lysyl-[protein] + acetyl-CoA = N(6)-biotinyl-L-lysyl-[protein] + malonyl-CoA. It functions in the pathway lipid metabolism; malonyl-CoA biosynthesis; malonyl-CoA from acetyl-CoA: step 1/1. Its function is as follows. Component of the acetyl coenzyme A carboxylase (ACC) complex. First, biotin carboxylase catalyzes the carboxylation of biotin on its carrier protein (BCCP) and then the CO(2) group is transferred by the carboxyltransferase to acetyl-CoA to form malonyl-CoA. In Prochlorococcus marinus (strain NATL1A), this protein is Acetyl-coenzyme A carboxylase carboxyl transferase subunit alpha.